A 412-amino-acid polypeptide reads, in one-letter code: Decapping nuclease RAI1 (412 aa).

Residue E196 participates in a divalent metal cation binding. Residues C228 and E245 each contribute to the substrate site. A divalent metal cation contacts are provided by D247, E265, and L266. Substrate contacts are provided by K267 and Q291.

Belongs to the DXO/Dom3Z family. In terms of assembly, interacts with exr-1/rat1; the interaction is direct, stabilizes exr-1 protein structure and stimulates its exoribonuclease activity. The interaction also stimulates rai1 pyrophosphohydrolase activity, probably by recruiting it to mRNA substrates. It depends on a divalent metal cation as a cofactor.

The protein localises to the nucleus. It catalyses the reaction a 5'-end NAD(+)-phospho-ribonucleoside in mRNA + H2O = a 5'-end phospho-ribonucleoside in mRNA + NAD(+) + H(+). The catalysed reaction is a 5'-end (N(7)-methyl 5'-triphosphoguanosine)-ribonucleoside-ribonucleotide in mRNA + H2O = a (N(7)-methyl 5'-triphosphoguanosine)-nucleoside + a 5'-end phospho-ribonucleoside in mRNA + H(+). It carries out the reaction a 5'-end triphospho-ribonucleoside in mRNA + H2O = a 5'-end phospho-ribonucleoside in mRNA + diphosphate + H(+). In terms of biological role, decapping enzyme for NAD-capped RNAs: specifically hydrolyzes the nicotinamide adenine dinucleotide (NAD) cap from a subset of RNAs by removing the entire NAD moiety from the 5'-end of an NAD-capped RNA. The NAD-cap is present at the 5'-end of some RNAs and snoRNAs. In contrast to the canonical 5'-end N7 methylguanosine (m7G) cap, the NAD cap promotes mRNA decay. Also acts as a non-canonical decapping enzyme that removes the entire cap structure of m7G capped or incompletely capped RNAs. Has decapping activity toward incomplete 5'-end m7G cap mRNAs such as unmethylated 5'-end-capped RNA (cap0), while it has no activity toward 2'-O-ribose methylated m7G cap (cap1). Also possesses RNA 5'-pyrophosphohydrolase activity by hydrolyzing the 5'-end triphosphate to release pyrophosphates. Stimulates exoribonuclease activity of Rat1, allowing it to degrade RNAs with stable secondary structure more effectively. This Neurospora crassa (strain ATCC 24698 / 74-OR23-1A / CBS 708.71 / DSM 1257 / FGSC 987) protein is Decapping nuclease RAI1 (rai1).